The primary structure comprises 180 residues: Interleukin-1-binding protein (180 aa).

An N-terminal signal peptide occupies residues 1–20 (MSILPVIFLPIFFYSPFVQT). N-linked (GlcNAc...) asparagine; by host glycans are attached at residues Asn-80, Asn-103, and Asn-113.

Belongs to the interleukin-1 receptor family. Interacts with mouse Il1b.

It is found in the secreted. Its function is as follows. May reduce the host inflammatory response by interacting with inteleukin-1 beta (Il1b) and thus decreasing the association between IL1B and its cellular receptor. This Monkeypox virus protein is Interleukin-1-binding protein (OPG201).